Consider the following 208-residue polypeptide: Ubiquinone biosynthesis protein COQ4 homolog, mitochondrial (208 aa).

Residues His105, Asp106, His109, and Glu122 each coordinate Zn(2+).

Belongs to the COQ4 family. As to quaternary structure, component of a multi-subunit COQ enzyme complex. It depends on Zn(2+) as a cofactor.

The protein resides in the mitochondrion inner membrane. The catalysed reaction is a 4-hydroxy-3-methoxy-5-(all-trans-polyprenyl)benzoate + H(+) = a 2-methoxy-6-(all-trans-polyprenyl)phenol + CO2. The protein operates within cofactor biosynthesis; ubiquinone biosynthesis. Lyase that catalyzes the C1-decarboxylation of 4-hydroxy-3-methoxy-5-(all-trans-polyprenyl)benzoic acid into 2-methoxy-6-(all-trans-polyprenyl)phenol during ubiquinone biosynthesis. The chain is Ubiquinone biosynthesis protein COQ4 homolog, mitochondrial from Nematostella vectensis (Starlet sea anemone).